Reading from the N-terminus, the 413-residue chain is Type II methyltransferase M.NaeI (413 aa).

The region spanning 4–317 (LEVVEICAGA…KRIRAALNME (314 aa)) is the SAM-dependent MTase C5-type domain. C78 is an active-site residue.

The protein belongs to the class I-like SAM-binding methyltransferase superfamily. C5-methyltransferase family.

It carries out the reaction a 2'-deoxycytidine in DNA + S-adenosyl-L-methionine = a 5-methyl-2'-deoxycytidine in DNA + S-adenosyl-L-homocysteine + H(+). In terms of biological role, a methylase that recognizes the double-stranded sequence 5'-GCCGGC-3', methylates C-? on both strands, and protects the DNA from cleavage by the NaeI endonuclease. The protein is Type II methyltransferase M.NaeI of Lentzea aerocolonigenes (Lechevalieria aerocolonigenes).